Consider the following 289-residue polypeptide: T-cell ecto-ADP-ribosyltransferase 2 (289 aa).

The first 20 residues, 1–20 (MTSKIFKFFLTWWLTQQVTG), serve as a signal peptide directing secretion. Intrachain disulfides connect Cys-41-Cys-246 and Cys-141-Cys-193. The region spanning 61–241 (EELKLEWEKA…IFLDSPERKK (181 aa)) is the TR mART core domain. N-linked (GlcNAc...) asparagine glycosylation is present at Asn-79. NAD(+)-binding residues include Tyr-98, Arg-146, and Gln-164. Arg-146 is a catalytic residue. Ser-167 is a catalytic residue. Ser-202 contacts NAD(+). Glu-209 is a catalytic residue. Asn-249 carries an N-linked (GlcNAc...) asparagine glycan. Ser-260 is lipidated: GPI-anchor amidated serine. Positions 261–289 (ISGSRESCVSLFLVVLLGLLVQQLTLAEL) are cleaved as a propeptide — removed in mature form.

Belongs to the Arg-specific ADP-ribosyltransferase family. Expressed in spleen, intestine and thymus.

The protein resides in the cell membrane. The enzyme catalyses L-arginyl-[protein] + NAD(+) = N(omega)-(ADP-D-ribosyl)-L-arginyl-[protein] + nicotinamide + H(+). The catalysed reaction is NAD(+) + H2O = ADP-D-ribose + nicotinamide + H(+). Functionally, has both NAD(+) glycohydrolase and ADP-ribosyltransferase activity. In Mus musculus (Mouse), this protein is T-cell ecto-ADP-ribosyltransferase 2 (Art2b).